The sequence spans 448 residues: Trigger factor (448 aa).

The 86-residue stretch at 172 to 257 (GDRVTVDFVG…MKKIEWPHLP (86 aa)) folds into the PPIase FKBP-type domain.

Belongs to the FKBP-type PPIase family. Tig subfamily.

The protein resides in the cytoplasm. It carries out the reaction [protein]-peptidylproline (omega=180) = [protein]-peptidylproline (omega=0). In terms of biological role, involved in protein export. Acts as a chaperone by maintaining the newly synthesized protein in an open conformation. Functions as a peptidyl-prolyl cis-trans isomerase. This Paraburkholderia phymatum (strain DSM 17167 / CIP 108236 / LMG 21445 / STM815) (Burkholderia phymatum) protein is Trigger factor.